We begin with the raw amino-acid sequence, 278 residues long: HTH-type transcriptional activator RhaS (278 aa).

The region spanning asparagine 174–glycine 272 is the HTH araC/xylS-type domain. 2 consecutive DNA-binding regions (H-T-H motif) follow at residues glutamate 191–threonine 212 and valine 239–phenylalanine 262.

Binds DNA as a dimer.

It is found in the cytoplasm. Functionally, activates expression of the rhaBAD and rhaT operons. In Klebsiella pneumoniae (strain 342), this protein is HTH-type transcriptional activator RhaS.